The following is a 309-amino-acid chain: MEKVLVIVGPTAVGKTALSIALAKKFNGEIISGDSMQVYRSLDIGTAKVTETEKEGIPHYLIDCREVSETYSAADFQKEGRQKIKEITEKGKLPIIVGGTGLYIQSLLYDFQLGSREIDDSPEIRETYNLFAEEKGNQALWLLLQQKDPLAANSIHFNNRKKVIRALEVFDKTGYSILTPKEKPARLYDYYLLGLETDRALLYERINQRVDQMMTEGLLEEAKQMFQQPHAQAAQGIGYKEFFPYFSGEQSLEMAVETVKQQSRRYAKRQLTWFRNRMAAHWWNLVQQPTDLPKLEKEVAEWLQQKESE.

9–16 (GPTAVGKT) is a binding site for ATP. Position 11 to 16 (11 to 16 (TAVGKT)) interacts with substrate. An interaction with substrate tRNA region spans residues 34 to 37 (DSMQ).

The protein belongs to the IPP transferase family. In terms of assembly, monomer. The cofactor is Mg(2+).

The catalysed reaction is adenosine(37) in tRNA + dimethylallyl diphosphate = N(6)-dimethylallyladenosine(37) in tRNA + diphosphate. In terms of biological role, catalyzes the transfer of a dimethylallyl group onto the adenine at position 37 in tRNAs that read codons beginning with uridine, leading to the formation of N6-(dimethylallyl)adenosine (i(6)A). The polypeptide is tRNA dimethylallyltransferase (Enterococcus faecalis (strain ATCC 700802 / V583)).